The following is a 641-amino-acid chain: FACT complex subunit SSRP1-A (641 aa).

The segment at 459–561 is disordered; the sequence is TDDDAVDPHL…DPNAPKRAMT (103 aa). Residues 476–487 are compositionally biased toward acidic residues; it reads GDEESDEEDEDF. Over residues 512-524 the composition is skewed to basic and acidic residues; it reads GGEKEKLSKKEAS. A DNA-binding region (HMG box) is located at residues 556-624; the sequence is PKRAMTPFMY…RYEKESAVYR (69 aa).

It belongs to the SSRP1 family. Component of the FACT complex, a stable heterodimer of SPT16 and SSRP1.

It localises to the nucleus. The protein localises to the chromosome. Component of the FACT complex, a general chromatin factor that acts to reorganize nucleosomes. The FACT complex is involved in multiple processes that require DNA as a template such as mRNA elongation, DNA replication and DNA repair. During transcription elongation the FACT complex acts as a histone chaperone that both destabilizes and restores nucleosomal structure. It facilitates the passage of RNA polymerase II and transcription by promoting the dissociation of one histone H2A-H2B dimer from the nucleosome, then subsequently promotes the reestablishment of the nucleosome following the passage of RNA polymerase II. Binds specifically to double-stranded DNA. The protein is FACT complex subunit SSRP1-A (SSRP1-A) of Oryza sativa subsp. japonica (Rice).